A 300-amino-acid chain; its full sequence is Tetrahydromethanopterin S-methyltransferase subunit E (300 aa).

Helical transmembrane passes span 62-82 (PVSY…LMGM), 86-106 (PILA…AYSV), 135-155 (PIVG…YLAV), 158-178 (LGNP…VGAI), 226-246 (YFCS…IIFL), and 261-281 (LITK…TTLL).

It belongs to the MtrE family. In terms of assembly, the complex is composed of 8 subunits; MtrA, MtrB, MtrC, MtrD, MtrE, MtrF, MtrG and MtrH.

It is found in the cell membrane. It catalyses the reaction 5-methyl-5,6,7,8-tetrahydromethanopterin + coenzyme M + 2 Na(+)(in) = 5,6,7,8-tetrahydromethanopterin + methyl-coenzyme M + 2 Na(+)(out). It functions in the pathway one-carbon metabolism; methanogenesis from CO(2); methyl-coenzyme M from 5,10-methylene-5,6,7,8-tetrahydromethanopterin: step 2/2. Its function is as follows. Part of a complex that catalyzes the formation of methyl-coenzyme M and tetrahydromethanopterin from coenzyme M and methyl-tetrahydromethanopterin. This is an energy-conserving, sodium-ion translocating step. This Methanococcus aeolicus (strain ATCC BAA-1280 / DSM 17508 / OCM 812 / Nankai-3) protein is Tetrahydromethanopterin S-methyltransferase subunit E.